Consider the following 381-residue polypeptide: Alkanesulfonate monooxygenase (381 aa).

The protein belongs to the SsuD family. In terms of assembly, homotetramer.

It carries out the reaction an alkanesulfonate + FMNH2 + O2 = an aldehyde + FMN + sulfite + H2O + 2 H(+). Its function is as follows. Catalyzes the desulfonation of aliphatic sulfonates. The polypeptide is Alkanesulfonate monooxygenase (Escherichia coli O8 (strain IAI1)).